Reading from the N-terminus, the 399-residue chain is Formate-dependent phosphoribosylglycinamide formyltransferase (399 aa).

N(1)-(5-phospho-beta-D-ribosyl)glycinamide is bound by residues 21–22 (EL) and E81. Residues R114, K156, 161–166 (SSGKGQ), 196–199 (EGFI), and E204 each bind ATP. The ATP-grasp domain maps to 119 to 314 (RLAAEELGLP…EFELHARAIL (196 aa)). Mg(2+)-binding residues include E273 and E285. Residues D292, K361, and 368–369 (RR) contribute to the N(1)-(5-phospho-beta-D-ribosyl)glycinamide site. Residues 370-399 (MGVAVANGESTDQARERAKLAASKVRPTRT) are disordered.

It belongs to the PurK/PurT family. As to quaternary structure, homodimer.

It carries out the reaction N(1)-(5-phospho-beta-D-ribosyl)glycinamide + formate + ATP = N(2)-formyl-N(1)-(5-phospho-beta-D-ribosyl)glycinamide + ADP + phosphate + H(+). The protein operates within purine metabolism; IMP biosynthesis via de novo pathway; N(2)-formyl-N(1)-(5-phospho-D-ribosyl)glycinamide from N(1)-(5-phospho-D-ribosyl)glycinamide (formate route): step 1/1. Functionally, involved in the de novo purine biosynthesis. Catalyzes the transfer of formate to 5-phospho-ribosyl-glycinamide (GAR), producing 5-phospho-ribosyl-N-formylglycinamide (FGAR). Formate is provided by PurU via hydrolysis of 10-formyl-tetrahydrofolate. The polypeptide is Formate-dependent phosphoribosylglycinamide formyltransferase (Dechloromonas aromatica (strain RCB)).